Consider the following 51-residue polypeptide: MRDKIRLVSSAGTGYFYTTDKNKRTMPEKMEIKKFDPVVRKHVIFKEAKIK.

The protein belongs to the bacterial ribosomal protein bL33 family.

The protein is Large ribosomal subunit protein bL33 of Idiomarina loihiensis (strain ATCC BAA-735 / DSM 15497 / L2-TR).